The primary structure comprises 148 residues: Glutamyl-tRNA(Gln) amidotransferase subunit C, mitochondrial (148 aa).

It belongs to the GatC family. In terms of assembly, subunit of the heterotrimeric GatCAB amidotransferase (AdT) complex, composed of A, B and C subunits.

It is found in the mitochondrion. It catalyses the reaction L-glutamyl-tRNA(Gln) + L-glutamine + ATP + H2O = L-glutaminyl-tRNA(Gln) + L-glutamate + ADP + phosphate + H(+). Its function is as follows. Allows the formation of correctly charged Gln-tRNA(Gln) through the transamidation of misacylated Glu-tRNA(Gln) in the mitochondria. The reaction takes place in the presence of glutamine and ATP through an activated gamma-phospho-Glu-tRNA(Gln). This Drosophila simulans (Fruit fly) protein is Glutamyl-tRNA(Gln) amidotransferase subunit C, mitochondrial.